The following is an 848-amino-acid chain: Translation initiation factor IF-2 (848 aa).

The tract at residues 1-265 is disordered; that stretch reads MSDTDGKKPL…GNQRAEKQVR (265 aa). Residues 89-162 show a composition bias toward basic and acidic residues; it reads KAREVEEAAQ…AEIAKPKTEA (74 aa). Over residues 163 to 179 the composition is skewed to low complexity; that stretch reads RPATPADRAAAEAAAVR. Positions 191–219 are enriched in basic and acidic residues; that stretch reads RKTDRDRDTRGGGGDDRDSRNKGRDDSRR. The region spanning 346 to 514 is the tr-type G domain; the sequence is PRAPIITIMG…AIALQAEILE (169 aa). A G1 region spans residues 355–362; that stretch reads GHVDHGKT. 355–362 is a binding site for GTP; that stretch reads GHVDHGKT. Residues 380–384 form a G2 region; that stretch reads GITQH. Residues 402–405 form a G3 region; sequence DTPG. GTP is bound by residues 402 to 406 and 456 to 459; these read DTPGH and NKID. Residues 456-459 are G4; sequence NKID. The G5 stretch occupies residues 492 to 494; it reads SAK.

Belongs to the TRAFAC class translation factor GTPase superfamily. Classic translation factor GTPase family. IF-2 subfamily.

Its subcellular location is the cytoplasm. Functionally, one of the essential components for the initiation of protein synthesis. Protects formylmethionyl-tRNA from spontaneous hydrolysis and promotes its binding to the 30S ribosomal subunits. Also involved in the hydrolysis of GTP during the formation of the 70S ribosomal complex. In Paracoccus denitrificans (strain Pd 1222), this protein is Translation initiation factor IF-2.